Consider the following 121-residue polypeptide: Large ribosomal subunit protein bL12 (121 aa).

This sequence belongs to the bacterial ribosomal protein bL12 family. In terms of assembly, homodimer. Part of the ribosomal stalk of the 50S ribosomal subunit. Forms a multimeric L10(L12)X complex, where L10 forms an elongated spine to which 2 to 4 L12 dimers bind in a sequential fashion. Binds GTP-bound translation factors.

Functionally, forms part of the ribosomal stalk which helps the ribosome interact with GTP-bound translation factors. Is thus essential for accurate translation. In Aeromonas hydrophila subsp. hydrophila (strain ATCC 7966 / DSM 30187 / BCRC 13018 / CCUG 14551 / JCM 1027 / KCTC 2358 / NCIMB 9240 / NCTC 8049), this protein is Large ribosomal subunit protein bL12.